The chain runs to 462 residues: ATP synthase subunit beta (462 aa).

151–158 (GGAGVGKT) serves as a coordination point for ATP.

The protein belongs to the ATPase alpha/beta chains family. As to quaternary structure, F-type ATPases have 2 components, CF(1) - the catalytic core - and CF(0) - the membrane proton channel. CF(1) has five subunits: alpha(3), beta(3), gamma(1), delta(1), epsilon(1). CF(0) has four main subunits: a(1), b(1), b'(1) and c(9-12).

Its subcellular location is the cell inner membrane. It carries out the reaction ATP + H2O + 4 H(+)(in) = ADP + phosphate + 5 H(+)(out). Produces ATP from ADP in the presence of a proton gradient across the membrane. The catalytic sites are hosted primarily by the beta subunits. In Chlorobium phaeovibrioides (strain DSM 265 / 1930) (Prosthecochloris vibrioformis (strain DSM 265)), this protein is ATP synthase subunit beta.